We begin with the raw amino-acid sequence, 276 residues long: Rhomboid protease GlpG (276 aa).

The next 6 membrane-spanning stretches (helical) occupy residues 94–114, 142–162, 169–189, 192–212, 229–249, and 250–270; these read GPVT…MQIL, ALMH…WYLG, LGSG…GYVQ, FSGP…GYVW, LIIF…GMSM, and ANGA…VDSL. Residue serine 201 is the Nucleophile of the active site. The active site involves histidine 254.

The protein belongs to the peptidase S54 family.

Its subcellular location is the cell inner membrane. The enzyme catalyses Cleaves type-1 transmembrane domains using a catalytic dyad composed of serine and histidine that are contributed by different transmembrane domains.. Its function is as follows. Rhomboid-type serine protease that catalyzes intramembrane proteolysis. This chain is Rhomboid protease GlpG, found in Escherichia coli O157:H7.